The following is a 289-amino-acid chain: MSPLANHSFVKMNGIGNEIVVLDLRDVKHVVTPDEARAVASRVPYDQMMVLQRPRFDGTEAFIRIYNNDGSESGACGNGMRCVVSQVFGKTGQTSATFETRAGLLNCWQGPAPDLYTVDMGVPRFGWQDIPLAEEFRDTRYIELQIGPIDAPILHSPSVVSMGNPHAVFWVDNDVNSYDLERFGPLLENHPIFPERANITLAQIVDRDHITMRTWERGAGLTRACGSAACATAVAAARLKRANRLVHMTLPGGELTIEWRERDDHVLMTGTATFEFEGRFEPALFASVA.

3 residues coordinate substrate: Asn17, Gln47, and Asn67. The Proton donor role is filled by Cys76. Substrate-binding positions include 77–78 (GN), Asn164, Asn198, and 216–217 (ER). Cys225 (proton acceptor) is an active-site residue. 226–227 (GS) serves as a coordination point for substrate.

Belongs to the diaminopimelate epimerase family. As to quaternary structure, homodimer.

The protein localises to the cytoplasm. It carries out the reaction (2S,6S)-2,6-diaminopimelate = meso-2,6-diaminopimelate. The protein operates within amino-acid biosynthesis; L-lysine biosynthesis via DAP pathway; DL-2,6-diaminopimelate from LL-2,6-diaminopimelate: step 1/1. Catalyzes the stereoinversion of LL-2,6-diaminopimelate (L,L-DAP) to meso-diaminopimelate (meso-DAP), a precursor of L-lysine and an essential component of the bacterial peptidoglycan. This chain is Diaminopimelate epimerase, found in Bradyrhizobium sp. (strain ORS 278).